The chain runs to 116 residues: Large ribosomal subunit protein eL18 (116 aa).

Belongs to the eukaryotic ribosomal protein eL18 family. Part of the 50S ribosomal subunit. Interacts weakly with proteins L4 and L15. Has been cross-linked to L4.

In terms of biological role, stabilizes the tertiary rRNA structure within the 23S rRNA domain (domain II) to which it binds. The chain is Large ribosomal subunit protein eL18 (rpl18e) from Haloarcula marismortui (strain ATCC 43049 / DSM 3752 / JCM 8966 / VKM B-1809) (Halobacterium marismortui).